The following is a 137-amino-acid chain: Actin-depolymerizing factor 7 (137 aa).

Position 6 is a phosphoserine (Ser6). The region spanning 7–137 (GMAVEDECKL…SFDIIKSRAL (131 aa)) is the ADF-H domain.

The protein belongs to the actin-binding proteins ADF family. Specifically expressed in pollen.

Its subcellular location is the cytoplasm. The protein resides in the cytoskeleton. Functionally, actin-depolymerizing protein. Severs actin filaments (F-actin) and binds to actin monomers. Binds monomeric actin (G-actin) with a marked preference for the ADP-loaded form and inhibits the rate of nucleotide exchange on G-actin. Required for pollen tube growth. Promotes turnover of longitudinal actin cables by severing actin filaments in pollen tubes. The protein is Actin-depolymerizing factor 7 (ADF7) of Arabidopsis thaliana (Mouse-ear cress).